The following is a 335-amino-acid chain: tRNA N6-adenosine threonylcarbamoyltransferase (335 aa).

Residues His-111 and His-115 each coordinate Fe cation. Substrate is bound by residues 134-138, Asp-167, Gly-180, and Asn-270; that span reads LISGG. Asp-298 serves as a coordination point for Fe cation.

Belongs to the KAE1 / TsaD family. The cofactor is Fe(2+).

The protein resides in the cytoplasm. It carries out the reaction L-threonylcarbamoyladenylate + adenosine(37) in tRNA = N(6)-L-threonylcarbamoyladenosine(37) in tRNA + AMP + H(+). Required for the formation of a threonylcarbamoyl group on adenosine at position 37 (t(6)A37) in tRNAs that read codons beginning with adenine. Is involved in the transfer of the threonylcarbamoyl moiety of threonylcarbamoyl-AMP (TC-AMP) to the N6 group of A37, together with TsaE and TsaB. TsaD likely plays a direct catalytic role in this reaction. This is tRNA N6-adenosine threonylcarbamoyltransferase from Nitrosococcus oceani (strain ATCC 19707 / BCRC 17464 / JCM 30415 / NCIMB 11848 / C-107).